We begin with the raw amino-acid sequence, 103 residues long: MEAQNIRIRLKAFDHRVLDQATGEIADTARRTGALIRGPIPLPTRIEKFCVNRGPHIDKKSREQFEVRTYKRLLDIVQPNAATVDALMKLDLAAGVNVEIKLA.

The protein belongs to the universal ribosomal protein uS10 family. Part of the 30S ribosomal subunit.

In terms of biological role, involved in the binding of tRNA to the ribosomes. The protein is Small ribosomal subunit protein uS10 of Novosphingobium aromaticivorans (strain ATCC 700278 / DSM 12444 / CCUG 56034 / CIP 105152 / NBRC 16084 / F199).